Here is a 370-residue protein sequence, read N- to C-terminus: MVQTLQKKGRVVVGMSGGVDSSVTAWLLKQQGYEVVGLFMKNWEDDDDSEYCSTRQDLLDAASVADLIGVEFEYVNFASEYKDRVFADFLREYSAGRTPNPDVLCNAEIKFKAFLDHAMSLGAEHIATGHYARVRAVDTARGQRFQLLKALDASKDQSYFLHRLNQAQLSRTLFPLGELHKTEVRRIAHEIGLHNAAKKDSTGICFIGERPFREFLNRYLPTAPGPILTPEGRRLGQHHGLAFYTLGQRKGLGIGGVKGQQREDGTADAWYSARKDLKNNALYVVQGHDHPWLLSDTLRAQDVNWVDGEAPAAGAYAAKTRYRQADAPCELRADEAGFDLSFAQAQWAVTPGQSAVLYDGDVCLGGGIII.

ATP-binding positions include 14 to 21 (GMSGGVDS) and methionine 40. Residues 100–102 (NPD) are interaction with target base in tRNA. The Nucleophile role is filled by cysteine 105. A disulfide bridge connects residues cysteine 105 and cysteine 205. Glycine 129 contributes to the ATP binding site. The tract at residues 155-157 (KDQ) is interaction with tRNA. Catalysis depends on cysteine 205, which acts as the Cysteine persulfide intermediate. An interaction with tRNA region spans residues 321 to 322 (RY).

It belongs to the MnmA/TRMU family.

The protein resides in the cytoplasm. It catalyses the reaction S-sulfanyl-L-cysteinyl-[protein] + uridine(34) in tRNA + AH2 + ATP = 2-thiouridine(34) in tRNA + L-cysteinyl-[protein] + A + AMP + diphosphate + H(+). Its function is as follows. Catalyzes the 2-thiolation of uridine at the wobble position (U34) of tRNA, leading to the formation of s(2)U34. The polypeptide is tRNA-specific 2-thiouridylase MnmA (Bordetella avium (strain 197N)).